The following is a 212-amino-acid chain: Large ribosomal subunit protein uL3 (212 aa).

The disordered stretch occupies residues 134–154 (RKTHGNSVSHRVPGSIGQNQT). Gln153 is modified (N5-methylglutamine).

Belongs to the universal ribosomal protein uL3 family. As to quaternary structure, part of the 50S ribosomal subunit. Forms a cluster with proteins L14 and L19. Post-translationally, methylated by PrmB.

One of the primary rRNA binding proteins, it binds directly near the 3'-end of the 23S rRNA, where it nucleates assembly of the 50S subunit. In Dichelobacter nodosus (strain VCS1703A), this protein is Large ribosomal subunit protein uL3.